The primary structure comprises 341 residues: MNVKDFDFYLPEELIAQHPLEKRDTSRLMVLDKETGEISHKNFYDIIDYLNEGDTLVLNNTRVMPARLIGEKEGTGGKIEFLLLKRVEKDRWECLAKPGKSARVGRRFTFGDGKLKAEVVEVKDNGNRIVEFYYEGIFEEVLDSLGEMPLPPYIHERLEDRERYQTVYSKENGSAAAPTAGLHFTEELLHKIKDRGINIAYVTLHVGLGTFRPVKVDTIEDHEMHSEYYHLSKEDAEVINATKKRGNKVISVGTTSTRTLETIADEDGNVKETNGWTNIFIYPGYKFKVVDRLITNFHLPESTLIMLVSTLAGKEHVMNAYEEAVKEKYRFFSFGDAMFIK.

It belongs to the QueA family. As to quaternary structure, monomer.

It is found in the cytoplasm. The enzyme catalyses 7-aminomethyl-7-carbaguanosine(34) in tRNA + S-adenosyl-L-methionine = epoxyqueuosine(34) in tRNA + adenine + L-methionine + 2 H(+). It functions in the pathway tRNA modification; tRNA-queuosine biosynthesis. Transfers and isomerizes the ribose moiety from AdoMet to the 7-aminomethyl group of 7-deazaguanine (preQ1-tRNA) to give epoxyqueuosine (oQ-tRNA). The chain is S-adenosylmethionine:tRNA ribosyltransferase-isomerase from Clostridium botulinum (strain Eklund 17B / Type B).